A 228-amino-acid polypeptide reads, in one-letter code: MDDFLKKDLGCLRSGDLKKCGELICEICRDLYTSGWVTGTGGGITIRSGDAIVIAPSGVQKERMELHHLFVMSLITREYMRMPALRLKPSQCTPLFLAVYTLRDAYACIHTHSQEAILLSTLFADSDHFSATGFEVLSYIPKGSKNNGFHKPTDKIKIPFINNTAHESDLHDSLQEAINLYPDTCAVIVRDHGIYCWGDTWQDTKMNTEAVEFLFQAYLRRRRLQKPE.

Cys-92 is a substrate binding site. The Zn(2+) site is built by His-110 and His-112. Glu-135 serves as the catalytic Proton donor/acceptor. Position 192 (His-192) interacts with Zn(2+).

This sequence belongs to the aldolase class II family. MtnB subfamily. Zn(2+) serves as cofactor.

The protein localises to the cytoplasm. It localises to the nucleus. The enzyme catalyses 5-(methylsulfanyl)-D-ribulose 1-phosphate = 5-methylsulfanyl-2,3-dioxopentyl phosphate + H2O. The protein operates within amino-acid biosynthesis; L-methionine biosynthesis via salvage pathway; L-methionine from S-methyl-5-thio-alpha-D-ribose 1-phosphate: step 2/6. Functionally, catalyzes the dehydration of methylthioribulose-1-phosphate (MTRu-1-P) into 2,3-diketo-5-methylthiopentyl-1-phosphate (DK-MTP-1-P). The protein is Methylthioribulose-1-phosphate dehydratase of Schizosaccharomyces pombe (strain 972 / ATCC 24843) (Fission yeast).